The sequence spans 68 residues: Conotoxin Lt5.11 (68 aa).

The N-terminal stretch at 1–19 (MLCLPVFIILLLLASPAAP) is a signal peptide. The propeptide occupies 20 to 54 (KSLETRIQNDLIRAGLTDADLKTEKGFLSGLLNVA).

Belongs to the conotoxin T superfamily. Post-translationally, contains 2 disulfide bonds that can be either 'C1-C3, C2-C4' or 'C1-C4, C2-C3', since these disulfide connectivities have been observed for conotoxins with cysteine framework V (for examples, see AC P0DQQ7 and AC P81755). In terms of tissue distribution, expressed by the venom duct.

The protein resides in the secreted. The protein is Conotoxin Lt5.11 of Conus litteratus (Lettered cone).